Here is a 917-residue protein sequence, read N- to C-terminus: Interleukin-6 receptor subunit beta (917 aa).

A signal peptide spans 1 to 22; it reads MSAPRIWLAQALLFFLTTESIG. The Extracellular portion of the chain corresponds to 23–617; it reads QLLEPCGYIY…TPKFAQGEIE (595 aa). One can recognise an Ig-like C2-type domain in the interval 26–120; the sequence is EPCGYIYPEF…IEQNVYGVTM (95 aa). Disulfide bonds link Cys-28-Cys-54 and Cys-48-Cys-103. Asn-43, Asn-61, Asn-83, and Asn-131 each carry an N-linked (GlcNAc...) asparagine glycan. 5 Fibronectin type-III domains span residues 128-221, 222-322, 327-417, 422-515, and 517-611; these read KPTN…VKPT, PPYN…TYED, PPSF…IPSP, AYSV…LKQA, and PARG…TPKF. A disulfide bond links Cys-134 and Cys-144. Asn-157 carries an N-linked (GlcNAc...) asparagine glycan. Cys-172 and Cys-180 are joined by a disulfide. Asn-225 carries an N-linked (GlcNAc...) asparagine glycan. Residues 308–312 carry the WSXWS motif motif; sequence WSDWS. An N-linked (GlcNAc...) asparagine glycan is attached at Asn-388. An intrachain disulfide couples Cys-456 to Cys-464. N-linked (GlcNAc...) asparagine glycans are attached at residues Asn-476 and Asn-551. The helical transmembrane segment at 618 to 639 threads the bilayer; sequence AIVVPVCLAFLLTTLLGVLFCF. The Cytoplasmic segment spans residues 640–917; it reads NKRDLIKKHI…TVRQGGYMPQ (278 aa). A Box 1 motif motif is present at residues 649 to 657; it reads IWPNVPDPS. Disordered regions lie at residues 658 to 678 and 719 to 754; these read KSHI…NSKD and TEGH…TAST. Phosphoserine occurs at positions 659 and 665. Over residues 729 to 753 the composition is skewed to low complexity; the sequence is SSCMSSSRPSISSNEENESAQSTAS. Ser-780, Ser-787, Ser-827, and Ser-837 each carry phosphoserine. The interval 898–917 is disordered; the sequence is EEIPKSYLPQTVRQGGYMPQ.

Belongs to the type I cytokine receptor family. Type 2 subfamily. In terms of assembly, component of a hexamer of two molecules each of IL6, IL6R and IL6ST; associates with the complex IL6:IL6R but does not interact with IL6. Forms heterodimers composed of LIFR and IL6ST (type I OSM receptor) which are activated by LIF and OSM. Also forms heterodimers composed of OSMR and IL6ST (type II receptor) which are activated by OSM but not by LIF. Interacts with HCK. Interacts with INPP5D/SHIP1. Interacts with SRC and YES. Interacts with ARMH4; this interaction prevents IL6ST protein homodimerization and bridges ARMH4 with IL6R and STAT3 and therefore inhibits phosphorylation of STAT3 at 'Tyr-705'. In terms of processing, phosphorylation of Ser-780 down-regulates cell surface expression. Heavily N-glycosylated. Glycosylation is required for protein stability and localization in plasma membrane but not for ligand binding. In terms of tissue distribution, expression not restricted to IL6-responsive cells. Found in tissues such as brain, heart, thymus, spleen, kidney, lung and liver. Found in all the cell lines tested except BaF-B03. Expressed paraventricular nucleus of the hypothalamus.

The protein resides in the cell membrane. Its function is as follows. Signal-transducing molecule. The receptor systems for IL6, LIF, OSM, CNTF, IL11, CTF1 and BSF3 can utilize IL6ST for initiating signal transmission. Binding of IL6 to IL6R induces IL6ST homodimerization and formation of a high-affinity receptor complex, which activates the intracellular JAK-MAPK and JAK-STAT3 signaling pathways. That causes phosphorylation of IL6ST tyrosine residues which in turn activates STAT3. In parallel, the IL6 signaling pathway induces the expression of two cytokine receptor signaling inhibitors, SOCS1 and SOCS3, which inhibit JAK and terminate the activity of the IL6 signaling pathway as a negative feedback loop. Also activates the yes-associated protein 1 (YAP) and NOTCH pathways to control inflammation-induced epithelial regeneration, independently of STAT3. Mediates signals which regulate immune response, hematopoiesis, pain control and bone metabolism. Has a role in embryonic development. Essential for survival of motor and sensory neurons and for differentiation of astrocytes. Required for expression of TRPA1 in nociceptive neurons. Required for the maintenance of PTH1R expression in the osteoblast lineage and for the stimulation of PTH-induced osteoblast differentiation. Required for normal trabecular bone mass and cortical bone composition. The protein is Interleukin-6 receptor subunit beta of Mus musculus (Mouse).